Consider the following 510-residue polypeptide: NAD(P)H-quinone oxidoreductase subunit 2 B, chloroplastic (510 aa).

A run of 13 helical transmembrane segments spans residues 24-44 (LLLF…GLIL), 59-79 (WFYF…LFRW), 99-119 (IFQF…VEYI), 124-144 (MAIT…MFLC), 149-169 (LITI…LSGY), 184-204 (LLMG…LYGL), 229-249 (ISIA…LAPF), 262-284 (TPVV…TRIF), 295-315 (WHLL…LIAI), 323-343 (MLAY…IVGD), 354-374 (YMLF…LFGL), 395-415 (ALSL…AGFF), and 418-438 (LHLF…IGLL).

This sequence belongs to the complex I subunit 2 family. As to quaternary structure, NDH is composed of at least 16 different subunits, 5 of which are encoded in the nucleus.

It is found in the plastid. The protein localises to the chloroplast thylakoid membrane. It carries out the reaction a plastoquinone + NADH + (n+1) H(+)(in) = a plastoquinol + NAD(+) + n H(+)(out). The enzyme catalyses a plastoquinone + NADPH + (n+1) H(+)(in) = a plastoquinol + NADP(+) + n H(+)(out). In terms of biological role, NDH shuttles electrons from NAD(P)H:plastoquinone, via FMN and iron-sulfur (Fe-S) centers, to quinones in the photosynthetic chain and possibly in a chloroplast respiratory chain. The immediate electron acceptor for the enzyme in this species is believed to be plastoquinone. Couples the redox reaction to proton translocation, and thus conserves the redox energy in a proton gradient. This chain is NAD(P)H-quinone oxidoreductase subunit 2 B, chloroplastic, found in Lemna minor (Common duckweed).